The sequence spans 297 residues: 4,5-DOPA dioxygenase extradiol-like protein (297 aa).

Residues His30, His82, His205, and His263 each coordinate Zn(2+).

This sequence belongs to the DODA-type extradiol aromatic ring-opening dioxygenase family. It depends on Zn(2+) as a cofactor.

Its subcellular location is the cytoplasm. It localises to the nucleus. In terms of biological role, may be involved in the metabolism of aromatic compounds. This Schizosaccharomyces pombe (strain 972 / ATCC 24843) (Fission yeast) protein is 4,5-DOPA dioxygenase extradiol-like protein.